A 209-amino-acid polypeptide reads, in one-letter code: Imidazoleglycerol-phosphate dehydratase (209 aa).

It belongs to the imidazoleglycerol-phosphate dehydratase family.

Its subcellular location is the cytoplasm. It carries out the reaction D-erythro-1-(imidazol-4-yl)glycerol 3-phosphate = 3-(imidazol-4-yl)-2-oxopropyl phosphate + H2O. The protein operates within amino-acid biosynthesis; L-histidine biosynthesis; L-histidine from 5-phospho-alpha-D-ribose 1-diphosphate: step 6/9. This Prochlorococcus marinus (strain MIT 9313) protein is Imidazoleglycerol-phosphate dehydratase.